Consider the following 280-residue polypeptide: Thymidylate synthase (280 aa).

Position 21 (arginine 21) interacts with dUMP. (6R)-5,10-methylene-5,6,7,8-tetrahydrofolate is bound at residue histidine 51. 142-143 (RR) lines the dUMP pocket. Catalysis depends on cysteine 162, which acts as the Nucleophile. Residues 182-185 (RSAD), asparagine 193, and 223-225 (HLY) contribute to the dUMP site. Aspartate 185 is a binding site for (6R)-5,10-methylene-5,6,7,8-tetrahydrofolate. (6R)-5,10-methylene-5,6,7,8-tetrahydrofolate is bound at residue alanine 279.

Belongs to the thymidylate synthase family. Bacterial-type ThyA subfamily. As to quaternary structure, homodimer.

It localises to the cytoplasm. The catalysed reaction is dUMP + (6R)-5,10-methylene-5,6,7,8-tetrahydrofolate = 7,8-dihydrofolate + dTMP. Its pathway is pyrimidine metabolism; dTTP biosynthesis. Functionally, catalyzes the reductive methylation of 2'-deoxyuridine-5'-monophosphate (dUMP) to 2'-deoxythymidine-5'-monophosphate (dTMP) while utilizing 5,10-methylenetetrahydrofolate (mTHF) as the methyl donor and reductant in the reaction, yielding dihydrofolate (DHF) as a by-product. This enzymatic reaction provides an intracellular de novo source of dTMP, an essential precursor for DNA biosynthesis. The protein is Thymidylate synthase of Acinetobacter baumannii (strain AB307-0294).